The chain runs to 188 residues: Elongation factor P (188 aa).

Belongs to the elongation factor P family.

The protein resides in the cytoplasm. The protein operates within protein biosynthesis; polypeptide chain elongation. Involved in peptide bond synthesis. Stimulates efficient translation and peptide-bond synthesis on native or reconstituted 70S ribosomes in vitro. Probably functions indirectly by altering the affinity of the ribosome for aminoacyl-tRNA, thus increasing their reactivity as acceptors for peptidyl transferase. This is Elongation factor P from Paramagnetospirillum magneticum (strain ATCC 700264 / AMB-1) (Magnetospirillum magneticum).